We begin with the raw amino-acid sequence, 220 residues long: 14-3-3-like protein (220 aa).

The protein belongs to the 14-3-3 family.

This is 14-3-3-like protein from Spinacia oleracea (Spinach).